A 484-amino-acid chain; its full sequence is Probable cytosol aminopeptidase (484 aa).

Residues Lys256 and Asp261 each contribute to the Mn(2+) site. The active site involves Lys268. Mn(2+) contacts are provided by Asp279, Asp338, and Glu340. Arg342 is a catalytic residue.

The protein belongs to the peptidase M17 family. The cofactor is Mn(2+).

Its subcellular location is the cytoplasm. The enzyme catalyses Release of an N-terminal amino acid, Xaa-|-Yaa-, in which Xaa is preferably Leu, but may be other amino acids including Pro although not Arg or Lys, and Yaa may be Pro. Amino acid amides and methyl esters are also readily hydrolyzed, but rates on arylamides are exceedingly low.. It catalyses the reaction Release of an N-terminal amino acid, preferentially leucine, but not glutamic or aspartic acids.. Presumably involved in the processing and regular turnover of intracellular proteins. Catalyzes the removal of unsubstituted N-terminal amino acids from various peptides. The chain is Probable cytosol aminopeptidase from Actinobacillus succinogenes (strain ATCC 55618 / DSM 22257 / CCUG 43843 / 130Z).